A 256-amino-acid polypeptide reads, in one-letter code: Pimeloyl-[acyl-carrier protein] methyl ester esterase (256 aa).

The 228-residue stretch at 15 to 242 (HLVLLHGWGL…AAHAPFISHP (228 aa)) folds into the AB hydrolase-1 domain. Substrate-binding positions include Trp22, 82-83 (SL), and 143-147 (FLALQ). Ser82 acts as the Nucleophile in catalysis. Residues Asp207 and His235 contribute to the active site. His235 is a binding site for substrate.

This sequence belongs to the AB hydrolase superfamily. Carboxylesterase BioH family. In terms of assembly, monomer.

The protein localises to the cytoplasm. It catalyses the reaction 6-carboxyhexanoyl-[ACP] methyl ester + H2O = 6-carboxyhexanoyl-[ACP] + methanol + H(+). It participates in cofactor biosynthesis; biotin biosynthesis. The physiological role of BioH is to remove the methyl group introduced by BioC when the pimeloyl moiety is complete. It allows to synthesize pimeloyl-ACP via the fatty acid synthetic pathway through the hydrolysis of the ester bonds of pimeloyl-ACP esters. The sequence is that of Pimeloyl-[acyl-carrier protein] methyl ester esterase from Shigella boydii serotype 18 (strain CDC 3083-94 / BS512).